The chain runs to 186 residues: Riboflavin kinase (186 aa).

Positions 42 and 44 each coordinate Mg(2+). The active-site Nucleophile is Glu-123.

This sequence belongs to the flavokinase family. Zn(2+) serves as cofactor. Requires Mg(2+) as cofactor.

The enzyme catalyses riboflavin + ATP = FMN + ADP + H(+). Its pathway is cofactor biosynthesis; FMN biosynthesis; FMN from riboflavin (ATP route): step 1/1. Functionally, catalyzes the phosphorylation of riboflavin (vitamin B2) to form flavin mononucleotide (FMN) coenzyme. This chain is Riboflavin kinase (FMN1), found in Eremothecium gossypii (strain ATCC 10895 / CBS 109.51 / FGSC 9923 / NRRL Y-1056) (Yeast).